Reading from the N-terminus, the 484-residue chain is ATP synthase subunit beta (484 aa).

152 to 159 (GGAGVGKT) contributes to the ATP binding site.

The protein belongs to the ATPase alpha/beta chains family. As to quaternary structure, F-type ATPases have 2 components, CF(1) - the catalytic core - and CF(0) - the membrane proton channel. CF(1) has five subunits: alpha(3), beta(3), gamma(1), delta(1), epsilon(1). CF(0) has three main subunits: a(1), b(2) and c(9-12). The alpha and beta chains form an alternating ring which encloses part of the gamma chain. CF(1) is attached to CF(0) by a central stalk formed by the gamma and epsilon chains, while a peripheral stalk is formed by the delta and b chains.

The protein localises to the cell inner membrane. The catalysed reaction is ATP + H2O + 4 H(+)(in) = ADP + phosphate + 5 H(+)(out). Functionally, produces ATP from ADP in the presence of a proton gradient across the membrane. The catalytic sites are hosted primarily by the beta subunits. This chain is ATP synthase subunit beta, found in Campylobacter lari (strain RM2100 / D67 / ATCC BAA-1060).